A 134-amino-acid chain; its full sequence is Probable glycine cleavage system H protein (134 aa).

Positions 29–110 (TVLVGITDYA…PYGAWIAKIK (82 aa)) constitute a Lipoyl-binding domain. K70 carries the N6-lipoyllysine modification.

This sequence belongs to the GcvH family. As to quaternary structure, the glycine cleavage system is composed of four proteins: P, T, L and H. Requires (R)-lipoate as cofactor.

Functionally, the glycine cleavage system catalyzes the degradation of glycine. The H protein shuttles the methylamine group of glycine from the P protein to the T protein. This chain is Probable glycine cleavage system H protein, found in Pyrococcus abyssi (strain GE5 / Orsay).